The sequence spans 243 residues: Peptidyl-tRNA hydrolase (243 aa).

Tyrosine 14 lines the tRNA pocket. Residue histidine 19 is the Proton acceptor of the active site. Residues phenylalanine 64, asparagine 66, and asparagine 112 each contribute to the tRNA site. The span at 190-205 (KAEEEKPAKEMKDAGK) shows a compositional bias: basic and acidic residues. The segment at 190–243 (KAEEEKPAKEMKDAGKKPASQSHIHQARNHNQPKLPATGPMADMLKKMFGKKGD) is disordered. Over residues 208 to 221 (ASQSHIHQARNHNQ) the composition is skewed to polar residues.

This sequence belongs to the PTH family. Monomer.

It localises to the cytoplasm. The enzyme catalyses an N-acyl-L-alpha-aminoacyl-tRNA + H2O = an N-acyl-L-amino acid + a tRNA + H(+). Hydrolyzes ribosome-free peptidyl-tRNAs (with 1 or more amino acids incorporated), which drop off the ribosome during protein synthesis, or as a result of ribosome stalling. Its function is as follows. Catalyzes the release of premature peptidyl moieties from peptidyl-tRNA molecules trapped in stalled 50S ribosomal subunits, and thus maintains levels of free tRNAs and 50S ribosomes. This chain is Peptidyl-tRNA hydrolase, found in Rhizobium johnstonii (strain DSM 114642 / LMG 32736 / 3841) (Rhizobium leguminosarum bv. viciae).